Reading from the N-terminus, the 1197-residue chain is Sensor protein EvgS (1197 aa).

An N-terminal signal peptide occupies residues 1 to 21; it reads MKFLPYIFLLCCGLWSTISFA. The Cytoplasmic portion of the chain corresponds to 22–325; sequence DEDYIEYRGI…SMTDENGSVR (304 aa). Residues 326–346 traverse the membrane as a helical segment; it reads GVMGDILNIITLQTGLNFSPI. At 347-537 the chain is on the periplasmic side; that stretch reads TVSHNIHAGT…TWDLYSEQFY (191 aa). The chain crosses the membrane as a helical span at residues 538–558; it reads IVTTLSVLLVGSSLLWGFYLL. Residues 559 to 1197 are Cytoplasmic-facing; it reads RSVRRRKVIQ…EIAVFCQKND (639 aa). Residues 718–938 enclose the Histidine kinase domain; that stretch reads TMSHEIRTPI…TFTITIPVEI (221 aa). Histidine 721 carries the phosphohistidine; by autocatalysis modification. The region spanning 960-1074 is the Response regulatory domain; that stretch reads SILIADDHPT…VLKTHLSQLH (115 aa). Aspartate 1009 carries the post-translational modification 4-aspartylphosphate. The region spanning 1098 to 1197 is the HPt domain; that stretch reads DLQLMQEILM…EIAVFCQKND (100 aa). The residue at position 1137 (histidine 1137) is a Phosphohistidine.

Post-translationally, activation requires a sequential transfer of a phosphate group from a His in the primary transmitter domain, to an Asp in the receiver domain and to a His in the secondary transmitter domain.

It localises to the cell inner membrane. The catalysed reaction is ATP + protein L-histidine = ADP + protein N-phospho-L-histidine.. In terms of biological role, member of the two-component regulatory system EvgS/EvgA. Phosphorylates EvgA via a four-step phosphorelay in response to environmental signals. The protein is Sensor protein EvgS (evgS) of Escherichia coli (strain K12).